The chain runs to 248 residues: NH(3)-dependent NAD(+) synthetase (248 aa).

Position 30–37 (30–37) interacts with ATP; it reads GLSGGIDS. Residue D36 coordinates Mg(2+). Position 114 (R114) interacts with deamido-NAD(+). T134 serves as a coordination point for ATP. E139 is a binding site for Mg(2+). Deamido-NAD(+) contacts are provided by K147 and D154. Positions 163 and 185 each coordinate ATP. 232–233 serves as a coordination point for deamido-NAD(+); that stretch reads HK.

Belongs to the NAD synthetase family. In terms of assembly, homodimer.

The enzyme catalyses deamido-NAD(+) + NH4(+) + ATP = AMP + diphosphate + NAD(+) + H(+). Its pathway is cofactor biosynthesis; NAD(+) biosynthesis; NAD(+) from deamido-NAD(+) (ammonia route): step 1/1. In terms of biological role, catalyzes the ATP-dependent amidation of deamido-NAD to form NAD. Uses ammonia as a nitrogen source. This is NH(3)-dependent NAD(+) synthetase from Mycoplasma genitalium (strain ATCC 33530 / DSM 19775 / NCTC 10195 / G37) (Mycoplasmoides genitalium).